Reading from the N-terminus, the 69-residue chain is uncharacterized protein (69 aa).

Residues 22–48 form a disordered region; the sequence is LFRKSRELSPIKPVRTPTPPAPTPPPM. The segment covering 37–48 has biased composition (pro residues); it reads TPTPPAPTPPPM.

This is an uncharacterized protein from Lepidoptera (butterflies and moths).